A 314-amino-acid chain; its full sequence is tRNA pseudouridine synthase B (314 aa).

His-43 provides a ligand contact to substrate. The active-site Nucleophile is Asp-48. Positions 76, 179, and 200 each coordinate substrate.

It belongs to the pseudouridine synthase TruB family. Type 1 subfamily.

The catalysed reaction is uridine(55) in tRNA = pseudouridine(55) in tRNA. Functionally, responsible for synthesis of pseudouridine from uracil-55 in the psi GC loop of transfer RNAs. This chain is tRNA pseudouridine synthase B, found in Shigella boydii serotype 4 (strain Sb227).